A 964-amino-acid chain; its full sequence is Translation initiation factor IF-2 (964 aa).

A compositionally biased stretch (low complexity) spans 105-119; sequence AALAESEASEAAPVV. Disordered regions lie at residues 105 to 133 and 146 to 378; these read AALAESEASEAAPVVDAEEVARREEEHRR and KARQ…PTEP. 4 stretches are compositionally biased toward basic and acidic residues: residues 123 to 133, 146 to 183, 197 to 253, and 266 to 278; these read EVARREEEHRR, KARQEAMEREEAERRARQEAAEAEQKRQAELAAKKAEE, EAPR…RAIR, and PAERKAEEVKKAE. Residues 288 to 302 show a composition bias toward low complexity; sequence KPAGEARPAAAKKPA. Pro residues predominate over residues 303 to 313; sequence APAPAAAPAPG. In terms of domain architecture, tr-type G spans 464–633; that stretch reads TRPPVVTVMG…LLQAEVLELK (170 aa). The G1 stretch occupies residues 473–480; the sequence is GHVDHGKT. Residue 473–480 coordinates GTP; sequence GHVDHGKT. The G2 stretch occupies residues 498 to 502; that stretch reads GITQH. A G3 region spans residues 519–522; it reads DTPG. GTP contacts are provided by residues 519-523 and 573-576; these read DTPGH and TKVD. A G4 region spans residues 573–576; the sequence is TKVD. The interval 609–611 is G5; that stretch reads SAK.

The protein belongs to the TRAFAC class translation factor GTPase superfamily. Classic translation factor GTPase family. IF-2 subfamily.

The protein localises to the cytoplasm. Its function is as follows. One of the essential components for the initiation of protein synthesis. Protects formylmethionyl-tRNA from spontaneous hydrolysis and promotes its binding to the 30S ribosomal subunits. Also involved in the hydrolysis of GTP during the formation of the 70S ribosomal complex. This Ralstonia pickettii (strain 12J) protein is Translation initiation factor IF-2.